A 1669-amino-acid polypeptide reads, in one-letter code: Collagen alpha-1(IV) chain (1669 aa).

The signal sequence occupies residues 1–27; that stretch reads MGPRLGVWLLLLLAALLLHEESSRAAA. Residues 28-172 constitute a propeptide, N-terminal propeptide (7S domain); that stretch reads KGGCAGSGCG…LGHIPGTLLK (145 aa). Positions 50–1445 are disordered; that stretch reads ERGLPGLQGV…PPGTPSVDHG (1396 aa). Residues 173–1440 form a triple-helical region region; that stretch reads GERGYPGQPG…PGSMGPPGTP (1268 aa). Residues 196–214 are compositionally biased toward pro residues; sequence VGPPGFTGPPGPPGPPGPP. 3-hydroxyproline occurs at positions 204, 207, and 210. Composition is skewed to basic and acidic residues over residues 254–263 and 289–298; these read TAMRGEKGQK and PGKDGEKGEK. Residues 347 to 356 are compositionally biased toward gly residues; sequence GYPGGPGAKG. The span at 357 to 366 shows a compositional bias: low complexity; the sequence is ETGPKGFPGI. A compositionally biased stretch (pro residues) spans 367-376; the sequence is PGQPGPPGFP. A compositionally biased stretch (low complexity) spans 396–412; it reads PGLPGVSLPGPSGRDGL. Composition is skewed to pro residues over residues 413–424 and 436–448; these read PGPPGPPGPPGQ and PGPP…PGIP. Positions 485–494 are enriched in low complexity; it reads PGEIGFPGQP. Basic and acidic residues-rich tracts occupy residues 497 to 508 and 535 to 545; these read KGDRGLPGRDGL and FDIRLKGDKGD. Over residues 586–595 the composition is skewed to gly residues; it reads GPPGGVGFPG. 3-hydroxyproline is present on residues Pro-587 and Pro-602. Pro-603 carries the post-translational modification 4-hydroxyproline. Pro-605 is modified (3-hydroxyproline). Pro-606, Pro-623, Pro-626, Pro-629, and Pro-632 each carry 4-hydroxyproline. The residue at position 647 (Pro-647) is a 3-hydroxyproline. Composition is skewed to gly residues over residues 758–767 and 797–817; these read GNVGGPGIPG and GVPG…GPPG. Positions 847–871 are enriched in low complexity; sequence SQGLPGLTGQSGLPGLPGQQGTPGQ. Residues 937-955 show a composition bias toward basic and acidic residues; sequence SMDKVDMGSMKGEKGDQGE. Gly residues predominate over residues 1011–1020; the sequence is GSAGGMGLPG. Composition is skewed to low complexity over residues 1030–1040, 1101–1114, and 1193–1212; these read IPGPQGIPGLP, SPGS…PGLP, and FPGL…QGFM. A 3-hydroxyproline modification is found at Pro-1214. Positions 1247-1258 are enriched in pro residues; sequence PGRPGPMGPPGL. Residues 1290-1299 are compositionally biased toward gly residues; that stretch reads GMPGIGGSPG. A compositionally biased stretch (pro residues) spans 1413–1428; the sequence is FGPPGPRGFPGPPGPD. Pro-1424 bears the 3-hydroxyproline mark. The Collagen IV NC1 domain occupies 1445 to 1669; the sequence is GFLVTRHSQT…SRCQVCMRRT (225 aa). Disulfide bonds link Cys-1460-Cys-1551, Cys-1493-Cys-1548, Cys-1505-Cys-1511, Cys-1570-Cys-1665, Cys-1604-Cys-1662, and Cys-1616-Cys-1622. Met-1533 is covalently cross-linked (S-Lysyl-methionine sulfilimine (Met-Lys) (interchain with K-1651)). Residue Lys-1651 forms an S-Lysyl-methionine sulfilimine (Lys-Met) (interchain with M-1533) linkage.

It belongs to the type IV collagen family. As to quaternary structure, there are six type IV collagen isoforms, alpha 1(IV)-alpha 6(IV), each of which can form a triple helix structure with 2 other chains to generate type IV collagen network. Interacts with EFEMP2. Lysines at the third position of the tripeptide repeating unit (G-X-Y) are hydroxylated in all cases. The modified lysines can be O-glycosylated. Post-translationally, contains 4-hydroxyproline. Prolines at the third position of the tripeptide repeating unit (G-X-Y) are hydroxylated in some or all of the chains. In terms of processing, contains 3-hydroxyproline. This modification occurs on the first proline residue in the sequence motif Gly-Pro-Hyp, where Hyp is 4-hydroxyproline. Type IV collagens contain numerous cysteine residues which are involved in inter- and intramolecular disulfide bonding. 12 of these, located in the NC1 domain, are conserved in all known type IV collagens. Post-translationally, the trimeric structure of the NC1 domains is stabilized by covalent bonds (sulfilimine cross-links) between Lys and Met residues. These cross-links are important for the mechanical stability of the basement membrane. Sulfilimine cross-link is catalyzed by PXDN. In terms of processing, proteolytic processing produces the C-terminal NC1 peptide, arresten.

The protein resides in the secreted. The protein localises to the extracellular space. It is found in the extracellular matrix. It localises to the basement membrane. Its function is as follows. Type IV collagen is the major structural component of glomerular basement membranes (GBM), forming a 'chicken-wire' meshwork together with laminins, proteoglycans and entactin/nidogen. Functionally, arresten, comprising the C-terminal NC1 domain, inhibits angiogenesis and tumor formation. The C-terminal half is found to possess the anti-angiogenic activity. Specifically inhibits endothelial cell proliferation, migration and tube formation. The chain is Collagen alpha-1(IV) chain from Bos taurus (Bovine).